A 428-amino-acid chain; its full sequence is Cytochrome P450-terp (428 aa).

Position 377 (C377) interacts with heme.

Belongs to the cytochrome P450 family. Heme is required as a cofactor.

Its subcellular location is the cytoplasm. Its function is as follows. Catalyzes the hydroxylation of alpha-terpineol. In Pseudomonas sp, this protein is Cytochrome P450-terp (cyp108).